Reading from the N-terminus, the 1101-residue chain is Serine/threonine-protein kinase PSK2 (1101 aa).

A Phosphothreonine modification is found at T118. Residues 841 to 1099 (FTILQVMGEG…IDEIYEDKWL (259 aa)) form the Protein kinase domain. ATP contacts are provided by residues 847 to 855 (MGEGAYGKV) and K870. D975 (proton acceptor) is an active-site residue.

This sequence belongs to the protein kinase superfamily. Ser/Thr protein kinase family.

It localises to the cytoplasm. The catalysed reaction is L-seryl-[protein] + ATP = O-phospho-L-seryl-[protein] + ADP + H(+). It catalyses the reaction L-threonyl-[protein] + ATP = O-phospho-L-threonyl-[protein] + ADP + H(+). Serine/threonine-protein kinase involved in the control of sugar metabolism and translation. Phosphorylates UGP1, which is required for normal glycogen and beta-(1,6)-glucan synthesis. This phosphorylation shifts glucose partitioning toward cell wall glucan synthesis at the expense of glycogen synthesis. Also phosphorylates the glycogen synthase GSY2 and the translation factors CAF20, TIF11 and SRO9. The polypeptide is Serine/threonine-protein kinase PSK2 (PSK2) (Saccharomyces cerevisiae (strain ATCC 204508 / S288c) (Baker's yeast)).